Consider the following 223-residue polypeptide: Endonuclease NucS (223 aa).

Belongs to the NucS endonuclease family.

The protein localises to the cytoplasm. Cleaves both 3' and 5' ssDNA extremities of branched DNA structures. This is Endonuclease NucS from Streptomyces griseus subsp. griseus (strain JCM 4626 / CBS 651.72 / NBRC 13350 / KCC S-0626 / ISP 5235).